The primary structure comprises 692 residues: Elongation factor G (692 aa).

The tr-type G domain maps to 8 to 282; sequence EKVRNIGIAA…AVVDYLPAPS (275 aa). GTP-binding positions include 17-24, 81-85, and 135-138; these read AHIDAGKT, DTPGH, and NKMD.

Belongs to the TRAFAC class translation factor GTPase superfamily. Classic translation factor GTPase family. EF-G/EF-2 subfamily.

Its subcellular location is the cytoplasm. In terms of biological role, catalyzes the GTP-dependent ribosomal translocation step during translation elongation. During this step, the ribosome changes from the pre-translocational (PRE) to the post-translocational (POST) state as the newly formed A-site-bound peptidyl-tRNA and P-site-bound deacylated tRNA move to the P and E sites, respectively. Catalyzes the coordinated movement of the two tRNA molecules, the mRNA and conformational changes in the ribosome. This Nostoc punctiforme (strain ATCC 29133 / PCC 73102) protein is Elongation factor G.